Consider the following 177-residue polypeptide: Adenine phosphoribosyltransferase (177 aa).

This sequence belongs to the purine/pyrimidine phosphoribosyltransferase family. As to quaternary structure, homodimer.

The protein localises to the cytoplasm. It catalyses the reaction AMP + diphosphate = 5-phospho-alpha-D-ribose 1-diphosphate + adenine. Its pathway is purine metabolism; AMP biosynthesis via salvage pathway; AMP from adenine: step 1/1. Functionally, catalyzes a salvage reaction resulting in the formation of AMP, that is energically less costly than de novo synthesis. The polypeptide is Adenine phosphoribosyltransferase (Synechococcus sp. (strain RCC307)).